Consider the following 108-residue polypeptide: Nucleoid-associated protein BMASAVP1_A1850 (108 aa).

The tract at residues 84–108 is disordered; the sequence is EATSQEKMSGMTSGLPLPPGFKLPF. A compositionally biased stretch (polar residues) spans 85 to 95; sequence ATSQEKMSGMT. A compositionally biased stretch (pro residues) spans 99-108; it reads PLPPGFKLPF.

The protein belongs to the YbaB/EbfC family. In terms of assembly, homodimer.

It is found in the cytoplasm. It localises to the nucleoid. In terms of biological role, binds to DNA and alters its conformation. May be involved in regulation of gene expression, nucleoid organization and DNA protection. This chain is Nucleoid-associated protein BMASAVP1_A1850, found in Burkholderia mallei (strain SAVP1).